Here is a 161-residue protein sequence, read N- to C-terminus: Endoribonuclease YbeY (161 aa).

Residues histidine 121, histidine 125, and histidine 131 each contribute to the Zn(2+) site.

It belongs to the endoribonuclease YbeY family. It depends on Zn(2+) as a cofactor.

The protein resides in the cytoplasm. Functionally, single strand-specific metallo-endoribonuclease involved in late-stage 70S ribosome quality control and in maturation of the 3' terminus of the 16S rRNA. This is Endoribonuclease YbeY from Xylella fastidiosa (strain M23).